Reading from the N-terminus, the 469-residue chain is 3-isopropylmalate dehydratase large subunit (469 aa).

Positions 350, 410, and 413 each coordinate [4Fe-4S] cluster.

Belongs to the aconitase/IPM isomerase family. LeuC type 1 subfamily. As to quaternary structure, heterodimer of LeuC and LeuD. [4Fe-4S] cluster is required as a cofactor.

The enzyme catalyses (2R,3S)-3-isopropylmalate = (2S)-2-isopropylmalate. It participates in amino-acid biosynthesis; L-leucine biosynthesis; L-leucine from 3-methyl-2-oxobutanoate: step 2/4. In terms of biological role, catalyzes the isomerization between 2-isopropylmalate and 3-isopropylmalate, via the formation of 2-isopropylmaleate. This is 3-isopropylmalate dehydratase large subunit from Sinorhizobium medicae (strain WSM419) (Ensifer medicae).